A 566-amino-acid chain; its full sequence is MTTREYDYIICGAGSAGNVLATRLTEDPDVTVLLLEAGGPDYRFDFRTQMPAALAYPLQGRRYNWAYETDPEPHMDNRRMECGRGKGLGGSSLINGMCYIRGNALDYDNWSTHKGLENWTYLDCLPYFKKAETRDVGPNDYHGGSGPVSVTTSKPGVNPLFEAMVDAGVQAGYPRTDDLNGYQQEGFGPMDRTVTPKGRRASTARGYLDQAKVRPNLEIVTHALADRILFDGKRASGVTYLRGSERATAHARREVLVCSGAIASPQLLQRSGVGPGAWLKELDIPVVLDLPGVGQNLQDHLEMYIQYECKEPVSLYPALKWWNQPKIGLEWMLNGTGLGASNHFEAGGFIRTRDDDPWPNIQYHFLPVAINYNGSNAIEMHGFQAHVGSMRSPSRGRVKLRSRDPNDHPSILFNYMAEALDWREFRDAIRATREIMRQPALDRYRGRELNPGADCKSDKELDAFVRARAETAFHPSCSCKMGYDDMAVVDEEGRVHGLDGLRVVDASIMPIITTGNLNAPTIMIAEKIADKIRGRQPLARVDVPYFVANGAPARNVAKAVRQPETV.

7-36 (DYIICGAGSAGNVLATRLTEDPDVTVLLLE) contributes to the FAD binding site. Positions 180-202 (NGYQQEGFGPMDRTVTPKGRRAS) are disordered. His474 serves as the catalytic Proton acceptor.

Belongs to the GMC oxidoreductase family. Requires FAD as cofactor.

The catalysed reaction is choline + A = betaine aldehyde + AH2. It catalyses the reaction betaine aldehyde + NAD(+) + H2O = glycine betaine + NADH + 2 H(+). It participates in amine and polyamine biosynthesis; betaine biosynthesis via choline pathway; betaine aldehyde from choline (cytochrome c reductase route): step 1/1. Its function is as follows. Involved in the biosynthesis of the osmoprotectant glycine betaine. Catalyzes the oxidation of choline to betaine aldehyde and betaine aldehyde to glycine betaine at the same rate. This chain is Oxygen-dependent choline dehydrogenase, found in Burkholderia orbicola (strain MC0-3).